Reading from the N-terminus, the 2187-residue chain is Nascent polypeptide-associated complex subunit alpha, muscle-specific form (2187 aa).

Disordered stretches follow at residues 1 to 20 (MPGE…PQPQ), 32 to 73 (LKVA…STPF), and 172 to 196 (IPPL…KGTA). The span at 9 to 20 (VPATEQELPQPQ) shows a compositional bias: polar residues. The segment covering 178–192 (KTSTSQVPSQGTLNL) has biased composition (polar residues). Arg-247 carries the post-translational modification Asymmetric dimethylarginine. 5 disordered regions span residues 335 to 370 (DSGA…LSPK), 579 to 611 (NTVS…SPLV), 738 to 835 (PKGS…PKDT), 884 to 1847 (KETL…PVEK), and 1892 to 2053 (PEAV…KAMS). The span at 347-369 (SAVTNELCSPPGSSNVAGTSLSP) shows a compositional bias: polar residues. Position 590 is a phosphothreonine (Thr-590). 3 stretches are compositionally biased toward polar residues: residues 599–609 (AKNTAPSTTSP), 818–835 (VTPT…PKDT), and 887–905 (LATS…TPKS). Residue Ser-822 is modified to Phosphoserine. Positions 941–951 (PHVPPTSPPKS) are enriched in pro residues. Positions 976–998 (TPTYPKKSPKPAASKKTPATPSP) are enriched in low complexity. Over residues 1106 to 1122 (TPQNATPNESLAASSQK) the composition is skewed to polar residues. 2 positions are modified to phosphoserine: Ser-1174 and Ser-1177. Residues 1174–1195 (SPLSPKKASKTAAPKEAPATPS) show a composition bias toward low complexity. Thr-1364 is subject to Phosphothreonine. Phosphoserine occurs at positions 1368 and 1392. The residue at position 1398 (Thr-1398) is a Phosphothreonine. Phosphoserine occurs at positions 1400 and 1423. Positions 1429 to 1440 (VTPSSKKLSQTV) are enriched in polar residues. Over residues 1489–1504 (SPSSPKKAPKTAAPPS) the composition is skewed to low complexity. The residue at position 1492 (Ser-1492) is a Phosphoserine. A compositionally biased stretch (polar residues) spans 1609 to 1631 (PVTTSLAQTAPPSLQKAPSTTIP). Composition is skewed to low complexity over residues 1636–1670 (AAPA…TAPK) and 1714–1727 (SSPP…KRAS). Over residues 1762 to 1772 (ACSTGTTTPQA) the composition is skewed to polar residues. 2 stretches are compositionally biased toward low complexity: residues 1806 to 1823 (KSPG…CPDP) and 1892 to 1914 (PEAV…LAPS). The PXLXP signature appears at 1950–1954 (PPLIP). Pro residues predominate over residues 1973-1983 (APKPAGTPAPA). A compositionally biased stretch (acidic residues) spans 2001–2014 (SDSDESVPELEEQD). Ser-2015 bears the Phosphoserine; by ILK1 mark. Low complexity predominate over residues 2016–2029 (TQTATQQAQLAAAA). The segment at 2041–2052 (QSRSEKKARKAM) is required for DNA-binding. Residues 2042 to 2107 (SRSEKKARKA…AKIEDLSQQA (66 aa)) form the NAC-A/B domain. Ser-2104 is modified (phosphoserine). Residue Lys-2114 is modified to N6-acetyllysine; alternate. Lys-2114 is covalently cross-linked (Glycyl lysine isopeptide (Lys-Gly) (interchain with G-Cter in SUMO2); alternate). Position 2131 is a phosphothreonine; by GSK3-beta (Thr-2131). A Phosphothreonine modification is found at Thr-2133. Phosphoserine is present on residues Ser-2138, Ser-2158, Ser-2163, and Ser-2175. One can recognise a UBA domain in the interval 2148–2185 (VEVKDIELVMSQANVSRAKAVRALKNNSNDIVNAIMEL).

Belongs to the NAC-alpha family. Interacts (via PXLXP motif) with the muscle-restricted histone methyltransferase SMYD1 (via MYND-type zinc finger). Post-translationally, phosphorylation of Ser-2015 by ILK during cell adhesion may promote nuclear localization. Phosphorylation of Thr-2131 by GSK3B may promote proteasome mediated degradation. Specifically expressed in heart and skeletal muscle: it is present in differentiated myotubes but not in myoblasts.

It is found in the cytoplasm. Its subcellular location is the nucleus. Its function is as follows. Cardiac- and muscle-specific transcription factor. May act to regulate the expression of genes involved in the development of myotubes. Plays a critical role in ventricular cardiomyocyte expansion and regulates postnatal skeletal muscle growth and regeneration. Involved in the organized assembly of thick and thin filaments of myofibril sarcomeres. The polypeptide is Nascent polypeptide-associated complex subunit alpha, muscle-specific form (Naca) (Mus musculus (Mouse)).